We begin with the raw amino-acid sequence, 1076 residues long: Structural maintenance of chromosomes protein 5 (1076 aa).

49–56 (GHNGSGKS) provides a ligand contact to ATP. A coiled-coil region spans residues 190–415 (STSIEDKCTT…KRDEEQNSQL (226 aa)). Over residues 375–410 (EQKYSTAERDSRQEEDAIQKKSYEMRQLENKKRDEE) the composition is skewed to basic and acidic residues. Residues 375–420 (EQKYSTAERDSRQEEDAIQKKSYEMRQLENKKRDEEQNSQLNRQDR) are disordered. Residues 416 to 617 (NRQDRYRVLQ…ANTWRDQFFK (202 aa)) form a flexible hinge region. Coiled-coil stretches lie at residues 627–713 (NSIL…EKKA) and 749–786 (KSRV…ALNH).

Belongs to the SMC family. SMC5 subfamily. Interacts with smc-6. As to expression, expressed in the germline (at protein level).

It localises to the nucleus. The protein localises to the chromosome. In terms of biological role, core component of the smc-5/smc-6 complex. Functions in DNA double strand break repair by promoting sister-chromatid homologous recombination during meiosis. Acts in a DNA repair pathway for removal of ionizing radiation- and ultraviolet (UV) radiation-induced DNA lesions that is distinct from classical nucleotide excision repair and the translesion synthesis pathway. Also involved in the recovery of stalled replication forks. The polypeptide is Structural maintenance of chromosomes protein 5 (Caenorhabditis elegans).